The chain runs to 126 residues: Aspartate 1-decarboxylase (126 aa).

Catalysis depends on serine 25, which acts as the Schiff-base intermediate with substrate; via pyruvic acid. The residue at position 25 (serine 25) is a Pyruvic acid (Ser). Threonine 57 is a substrate binding site. Catalysis depends on tyrosine 58, which acts as the Proton donor. 73 to 75 contributes to the substrate binding site; sequence GAA.

Belongs to the PanD family. In terms of assembly, heterooctamer of four alpha and four beta subunits. The cofactor is pyruvate. Post-translationally, is synthesized initially as an inactive proenzyme, which is activated by self-cleavage at a specific serine bond to produce a beta-subunit with a hydroxyl group at its C-terminus and an alpha-subunit with a pyruvoyl group at its N-terminus.

It localises to the cytoplasm. It catalyses the reaction L-aspartate + H(+) = beta-alanine + CO2. It participates in cofactor biosynthesis; (R)-pantothenate biosynthesis; beta-alanine from L-aspartate: step 1/1. Functionally, catalyzes the pyruvoyl-dependent decarboxylation of aspartate to produce beta-alanine. This Chromohalobacter salexigens (strain ATCC BAA-138 / DSM 3043 / CIP 106854 / NCIMB 13768 / 1H11) protein is Aspartate 1-decarboxylase.